We begin with the raw amino-acid sequence, 164 residues long: Coenzyme Q-binding protein coq10, mitochondrial (164 aa).

Belongs to the COQ10 family. In terms of assembly, interacts with coenzyme Q.

It localises to the mitochondrion inner membrane. Required for the function of coenzyme Q in the respiratory chain. May serve as a chaperone or may be involved in the transport of Q6 from its site of synthesis to the catalytic sites of the respiratory complexes. The protein is Coenzyme Q-binding protein coq10, mitochondrial of Schizosaccharomyces pombe (strain 972 / ATCC 24843) (Fission yeast).